Reading from the N-terminus, the 356-residue chain is DNA polymerase IV (356 aa).

The UmuC domain maps to 1–188; it reads MDTSRKIIHI…IPVTKFYGVG (188 aa). Asp-11 and Asp-106 together coordinate Mg(2+). Glu-107 is an active-site residue.

The protein belongs to the DNA polymerase type-Y family. In terms of assembly, monomer. Mg(2+) serves as cofactor.

The protein resides in the cytoplasm. It carries out the reaction DNA(n) + a 2'-deoxyribonucleoside 5'-triphosphate = DNA(n+1) + diphosphate. Poorly processive, error-prone DNA polymerase involved in untargeted mutagenesis. Copies undamaged DNA at stalled replication forks, which arise in vivo from mismatched or misaligned primer ends. These misaligned primers can be extended by PolIV. Exhibits no 3'-5' exonuclease (proofreading) activity. May be involved in translesional synthesis, in conjunction with the beta clamp from PolIII. The chain is DNA polymerase IV from Listeria monocytogenes serovar 1/2a (strain ATCC BAA-679 / EGD-e).